The following is a 450-amino-acid chain: MKHTEQFHQKHILVLGLAKSGEAAARLLHDLGAIVTVNDQKPLADNPQAQKLQKEGIHVVCGEHPISLLDGKELVVKNPGIRYDNPIVEEAIKRGISVVTEVELASKVSEAEIVAITGSNGKTTTTSLVVEMLKGSAREPKVAGNIGVVASDVAREATADDVIVMEVSSFQLMGTSHFRPKVAILLNIFDAHLDYHGSKENYVAAKKKIVENMKEEDYFVYNADDPLVSKVAAETKATPIPFSRSTVVKSGAYVDGETYMFRGEKIVEKGDVVLPGDHNVDNVLAAMSAALLMGATKEQIHHVLSTFSGVEHRLQFVGTAFERKWYNDSKATNILSTTAAIQSFTDPIVLLAGGLDRGNSFDDLIPALQKVKAVVLFGETKHKLAQAAMEAGVETIVEAERVEDAVRKALDVSANGDVILLSPACASWDQYRTFEERGEAFVTSIEGLQE.

G118–T124 contributes to the ATP binding site.

Belongs to the MurCDEF family.

The protein localises to the cytoplasm. It catalyses the reaction UDP-N-acetyl-alpha-D-muramoyl-L-alanine + D-glutamate + ATP = UDP-N-acetyl-alpha-D-muramoyl-L-alanyl-D-glutamate + ADP + phosphate + H(+). It participates in cell wall biogenesis; peptidoglycan biosynthesis. In terms of biological role, cell wall formation. Catalyzes the addition of glutamate to the nucleotide precursor UDP-N-acetylmuramoyl-L-alanine (UMA). The protein is UDP-N-acetylmuramoylalanine--D-glutamate ligase of Halalkalibacterium halodurans (strain ATCC BAA-125 / DSM 18197 / FERM 7344 / JCM 9153 / C-125) (Bacillus halodurans).